The following is a 373-amino-acid chain: MLVSRRLTGARARAPLLASLLEAWCRQGRTTSSYSAFSEPSHVRALVYGNHGDPAKVIQLKNLELTAVEGSDVHVKMLAAPINPSDINMIQGNYGLLPKLPAVGGNEGVGQVIAVGSSVSGLKPGDWVIPANAGLGTWRTEAVFSEEALIGVPKDIPLQSAATLGVNPCTAYRMLVDFEQLQPGDSVIQNASNSGVGQAVIQIASALGLKTINVIRDRPDIKKLTDRLKDLGADYVLTEEELRMPETKNIFKDLPLPRLALNCVGGKSSTELLRHLAPGGTMVTYGGMAKQPVTASVSMLIFKDLKLRGFWLSQWKKNHSPDEFKELILILCNLIRQGQLTAPAWSGIPLQDYQQALEASMKPFVSLKQILTM.

Residues methionine 1–aspartate 53 constitute a mitochondrion transit peptide. Position 61 is an N6-acetyllysine; alternate (lysine 61). At lysine 61 the chain carries N6-succinyllysine; alternate. Tyrosine 94 functions as the Proton donor in the catalytic mechanism. NADP(+)-binding positions include asparagine 167, asparagine 193–valine 196, and arginine 216–arginine 218. Lysine 252 and lysine 267 each carry N6-acetyllysine; alternate. Lysine 252 and lysine 267 each carry N6-succinyllysine; alternate. Residues tyrosine 285–methionine 288 and phenylalanine 310–leucine 312 contribute to the NADP(+) site. Position 316 is an N6-succinyllysine (lysine 316). Lysine 368 provides a ligand contact to NADP(+).

It belongs to the zinc-containing alcohol dehydrogenase family. Quinone oxidoreductase subfamily. Homodimer. In terms of assembly, interacts with PPARA in the nucleus and increases its activity.

Its subcellular location is the mitochondrion. The protein localises to the cytoplasm. It localises to the nucleus. The enzyme catalyses a 2,3-saturated acyl-[ACP] + NADP(+) = a (2E)-enoyl-[ACP] + NADPH + H(+). It carries out the reaction (2E)-butenoyl-[ACP] + NADPH + H(+) = butanoyl-[ACP] + NADP(+). The catalysed reaction is (2E)-hexenoyl-[ACP] + NADPH + H(+) = hexanoyl-[ACP] + NADP(+). It catalyses the reaction (2E)-octenoyl-[ACP] + NADPH + H(+) = octanoyl-[ACP] + NADP(+). The enzyme catalyses (2E)-decenoyl-[ACP] + NADPH + H(+) = decanoyl-[ACP] + NADP(+). It carries out the reaction (2E)-dodecenoyl-[ACP] + NADPH + H(+) = dodecanoyl-[ACP] + NADP(+). The catalysed reaction is (2E)-tetradecenoyl-[ACP] + NADPH + H(+) = tetradecanoyl-[ACP] + NADP(+). It catalyses the reaction (2E)-hexadecenoyl-[ACP] + NADPH + H(+) = hexadecanoyl-[ACP] + NADP(+). Catalyzes the NADPH-dependent reduction of trans-2-enoyl thioesters in mitochondrial fatty acid synthesis (fatty acid synthesis type II). Fatty acid chain elongation in mitochondria uses acyl carrier protein (ACP) as an acyl group carrier, but the enzyme accepts both ACP and CoA thioesters as substrates in vitro. Displays a preference for medium-chain over short- and long-chain substrates. May provide the octanoyl chain used for lipoic acid biosynthesis, regulating protein lipoylation and mitochondrial respiratory activity particularly in Purkinje cells. Involved in iron homeostasis; affecting Fe-S cluster assembly and ceramide metabolism. Required for proper morphology and bioenergetic functions of mitochondria. Required for maintenance of neurons. This Rattus norvegicus (Rat) protein is Enoyl-[acyl-carrier-protein] reductase, mitochondrial (Mecr).